The following is a 179-amino-acid chain: Inosine/xanthosine triphosphatase (179 aa).

Glu-71 lines the Mg(2+) pocket. 71–72 (EA) contacts substrate.

Belongs to the YjjX NTPase family. In terms of assembly, homodimer. The cofactor is Mg(2+). It depends on Mn(2+) as a cofactor.

The enzyme catalyses XTP + H2O = XDP + phosphate + H(+). It carries out the reaction ITP + H2O = IDP + phosphate + H(+). Functionally, phosphatase that hydrolyzes non-canonical purine nucleotides such as XTP and ITP to their respective diphosphate derivatives. Probably excludes non-canonical purines from DNA/RNA precursor pool, thus preventing their incorporation into DNA/RNA and avoiding chromosomal lesions. The polypeptide is Inosine/xanthosine triphosphatase (Shewanella sp. (strain MR-7)).